Consider the following 283-residue polypeptide: Non-selective voltage-gated ion channel VDAC3 (283 aa).

Residue cysteine 2 is modified to N-acetylcysteine. Threonine 4 carries the post-translational modification Phosphothreonine. Lysine 12, lysine 15, and lysine 20 each carry N6-acetyllysine. Beta stranded transmembrane passes span 26–35 (MVKIDLRTKS) and 39–47 (VEFSTSGHA). A Glycyl lysine isopeptide (Lys-Gly) (interchain with G-Cter in ubiquitin) cross-link involves residue lysine 53. Transmembrane regions (beta stranded) follow at residues 54–64 (ASGNLETKYKV), 69–76 (LTFTQKWN), and 80–89 (TLGTEISLEN). Lysine 90 is modified (N6-acetyllysine). The chain crosses the membrane as a beta stranded span at residues 95 to 104 (LKLTLDTIFV). Residues lysine 109 and lysine 110 each participate in a glycyl lysine isopeptide (Lys-Gly) (interchain with G-Cter in ubiquitin) cross-link. The next 10 beta stranded transmembrane spans lie at 111-120 (SGKLKASYKR), 123-130 (FSLGSNVD), 137-145 (TIYGWAVLA), 150-158 (LAGYQMSFD), 163-175 (KLSQ…GYKA), 178-185 (FQLHTHVN), 189-198 (EFGGSIYQKV), 202-211 (IETSINLAWT), 218-227 (RFGIAAKYKL), and 231-238 (TSLSAKVN). Phosphoserine is present on serine 241. NAD(+)-binding positions include 242 to 244 (LIG) and 260 to 264 (SALID). Beta stranded transmembrane passes span 242 to 251 (LIGLGYTQTL) and 254 to 263 (GVKLTLSALI). Lysine 266 carries the N6-acetyllysine; alternate modification. Lysine 266 participates in a covalent cross-link: Glycyl lysine isopeptide (Lys-Gly) (interchain with G-Cter in ubiquitin); alternate. The beta stranded transmembrane segment at 273 to 282 (HKVGLGFELE) threads the bilayer.

Belongs to the eukaryotic mitochondrial porin family. As to quaternary structure, interacts with ARMC12 in a TBC1D21-dependent manner. Interacts with MISFA. Post-translationally, ubiquitinated by PRKN during mitophagy, leading to its degradation and enhancement of mitophagy. Deubiquitinated by USP30.

The protein resides in the mitochondrion outer membrane. The protein localises to the membrane. The catalysed reaction is chloride(in) = chloride(out). It catalyses the reaction K(+)(in) = K(+)(out). Its function is as follows. Non-selective voltage-gated ion channel that mediates the transport of anions and cations through the mitochondrion outer membrane and plasma membrane. Forms a high-conducting channel with a stable open state and a voltage-induced closure with a mild preference for anions over cations. Involved in male fertility and sperm mitochondrial sheath formation. This chain is Non-selective voltage-gated ion channel VDAC3, found in Oryctolagus cuniculus (Rabbit).